The chain runs to 541 residues: Serine/threonine-protein kinase akt-1 (541 aa).

The PH domain maps to 15 to 118 (DVVIEGWLHK…WIHAIESISK (104 aa)). In terms of domain architecture, Protein kinase spans 193 to 450 (FDFLKVLGKG…ALEICRADFF (258 aa)). Residues 199–207 (LGKGTFGKV) and Lys222 contribute to the ATP site. Asp316 serves as the catalytic Proton acceptor. Phosphothreonine is present on Thr350. One can recognise an AGC-kinase C-terminal domain in the interval 451–528 (RTVDWEATYR…HNVMGSINRI (78 aa)). Phosphoserine is present on Ser517.

Belongs to the protein kinase superfamily. AGC Ser/Thr protein kinase family. RAC subfamily. As to quaternary structure, interacts with pdk-1, sgk-1, akt-2 and daf-16. Part of a complex containing sgk-1, akt-1 and akt-2. Interacts with cmd-1 in the presence of Ca(2+). Interacts with let-92 phosphatase regulatory subunit pptr-1. Requires Mg(2+) as cofactor. In terms of tissue distribution, expressed in neurons, muscle cells of the pharynx, rectal gland cells, vulva and spermatheca.

It catalyses the reaction L-seryl-[protein] + ATP = O-phospho-L-seryl-[protein] + ADP + H(+). The catalysed reaction is L-threonyl-[protein] + ATP = O-phospho-L-threonyl-[protein] + ADP + H(+). With respect to regulation, phosphorylated and activated by pdk-1. In terms of biological role, acts downstream of PI3 kinase age-1 and kinase pdk-1 in the daf-2/insulin receptor-like transduction pathway. Phosphorylates Forkhead-related daf-16 and the longevity-promoting skn-1 transcription factors, which inhibits their entry into the nucleus and antagonizes their functions. Plays a role in maintaining the gonadal basement membrane through it's role in inhibiting daf-16 activity. Has an essential role in regulating developmental arrest at the dauer stage. Plays a role in immune function and pathogen resistance. Regulates salt chemotaxis learning. Downstream of age-1 and together with akt-2 and sgk-1, promotes cell survival during embryonic development. The chain is Serine/threonine-protein kinase akt-1 from Caenorhabditis elegans.